A 152-amino-acid chain; its full sequence is Large ribosomal subunit protein bL9 (152 aa).

It belongs to the bacterial ribosomal protein bL9 family.

Functionally, binds to the 23S rRNA. The polypeptide is Large ribosomal subunit protein bL9 (Trichormus variabilis (strain ATCC 29413 / PCC 7937) (Anabaena variabilis)).